The sequence spans 712 residues: Auxin response factor 15 (712 aa).

Residues 142 to 244 (FCKTLTASDT…ELRLGVRRAA (103 aa)) constitute a DNA-binding region (TF-B3).

The protein belongs to the ARF family. In terms of assembly, homo and heterodimers. Expressed in roots, culms, leaves and young panicles.

Its subcellular location is the nucleus. In terms of biological role, auxin response factors (ARFs) are transcriptional factors that bind specifically to the DNA sequence 5'-TGTCTC-3' found in the auxin-responsive promoter elements (AuxREs). The protein is Auxin response factor 15 (ARF15) of Oryza sativa subsp. japonica (Rice).